Here is a 307-residue protein sequence, read N- to C-terminus: Acyl transferase (307 aa).

Residues S116, D213, and H243 each act as charge relay system in the active site.

Belongs to the LuxD family.

It participates in lipid metabolism; fatty acid reduction for biolumincescence. In terms of biological role, acyl transferase is part of the fatty acid reductase system required for aldehyde biosynthesis; it produces fatty acids for the luminescent reaction. This Photorhabdus laumondii subsp. laumondii (strain DSM 15139 / CIP 105565 / TT01) (Photorhabdus luminescens subsp. laumondii) protein is Acyl transferase.